Here is a 478-residue protein sequence, read N- to C-terminus: Allene oxide synthase 2 (478 aa).

Lysine 88, histidine 119, and lysine 123 together coordinate heme b. Position 278 (asparagine 278) interacts with (13S)-hydroperoxy-(9Z,11E,15Z)-octadecatrienoate. The heme b site is built by lysine 427 and cysteine 429.

This sequence belongs to the cytochrome P450 family. Heme b is required as a cofactor. As to expression, weakly expressed in roots, shoots, leaves and flowers.

It catalyses the reaction (13S)-hydroperoxy-(9Z,11E,15Z)-octadecatrienoate = (9Z,13S,15Z)-12,13-epoxyoctadeca-9,11,15-trienoate + H2O. It functions in the pathway lipid metabolism; oxylipin biosynthesis. Its function is as follows. Involved in the biosynthesis of jasmonic acid, a growth regulator that is implicated also as a signaling molecule in plant defense. Converts 13-hydroperoxylinolenic acid to 12,13-epoxylinolenic acid. The polypeptide is Allene oxide synthase 2 (CYP74A2) (Oryza sativa subsp. japonica (Rice)).